Here is a 156-residue protein sequence, read N- to C-terminus: Arginine repressor (156 aa).

Belongs to the ArgR family.

It localises to the cytoplasm. It functions in the pathway amino-acid biosynthesis; L-arginine biosynthesis [regulation]. Regulates arginine biosynthesis genes. This chain is Arginine repressor, found in Sodalis glossinidius (strain morsitans).